A 457-amino-acid chain; its full sequence is tRNA (guanine(37)-N(1))-methyltransferase (457 aa).

S-adenosyl-L-methionine-binding positions include His-225, 263 to 264 (DL), 291 to 292 (DG), and Asn-358.

It belongs to the class I-like SAM-binding methyltransferase superfamily. TRM5/TYW2 family. In terms of assembly, monomer.

The protein localises to the mitochondrion matrix. It is found in the nucleus. It localises to the cytoplasm. It carries out the reaction guanosine(37) in tRNA + S-adenosyl-L-methionine = N(1)-methylguanosine(37) in tRNA + S-adenosyl-L-homocysteine + H(+). Functionally, specifically methylates the N1 position of guanosine-37 in various cytoplasmic and mitochondrial tRNAs. Methylation is not dependent on the nature of the nucleoside 5' of the target nucleoside. This is the first step in the biosynthesis of wybutosine (yW), a modified base adjacent to the anticodon of tRNAs and required for accurate decoding. This chain is tRNA (guanine(37)-N(1))-methyltransferase, found in Coprinopsis cinerea (strain Okayama-7 / 130 / ATCC MYA-4618 / FGSC 9003) (Inky cap fungus).